The chain runs to 124 residues: MIPLILAVSAGGVAGTLLRFATGNWINANWPRHFYTATLAVNIVGCLLIGVLYGLFLVRPEVPIEVRAGLIVGFLGGLTTFSSFSLDTVRLLESGQVALALGYAALSVFGGLLATWAGLSLTKL.

4 helical membrane-spanning segments follow: residues 1 to 21, 38 to 58, 69 to 89, and 97 to 117; these read MIPL…LRFA, TLAV…LFLV, GLIV…LDTV, and VALA…ATWA. The Na(+) site is built by Gly-76 and Thr-79.

It belongs to the fluoride channel Fluc/FEX (TC 1.A.43) family.

It is found in the cell inner membrane. The enzyme catalyses fluoride(in) = fluoride(out). With respect to regulation, na(+) is not transported, but it plays an essential structural role and its presence is essential for fluoride channel function. Its function is as follows. Fluoride-specific ion channel. Important for reducing fluoride concentration in the cell, thus reducing its toxicity. This chain is Fluoride-specific ion channel FluC, found in Pseudomonas fluorescens (strain ATCC BAA-477 / NRRL B-23932 / Pf-5).